We begin with the raw amino-acid sequence, 383 residues long: Hippurate hydrolase (383 aa).

The protein belongs to the peptidase M20 family.

The enzyme catalyses N-benzoylglycine + H2O = benzoate + glycine. Its function is as follows. Cleaves hippuric acid into benzoic acid and glycine. The chain is Hippurate hydrolase from Campylobacter jejuni subsp. jejuni serotype O:2 (strain ATCC 700819 / NCTC 11168).